We begin with the raw amino-acid sequence, 620 residues long: Chaperone protein DnaK (620 aa).

Residues 579–620 form a disordered region; that stretch reads KAQKEASAGAEASEDASGPSSTGSASDDDVVDADYEVVDEDK. The span at 583-603 shows a compositional bias: low complexity; that stretch reads EASAGAEASEDASGPSSTGSA. The segment covering 604 to 620 has biased composition (acidic residues); it reads SDDDVVDADYEVVDEDK.

This sequence belongs to the heat shock protein 70 family.

Acts as a chaperone. This chain is Chaperone protein DnaK, found in Methanococcoides burtonii (strain DSM 6242 / NBRC 107633 / OCM 468 / ACE-M).